The primary structure comprises 296 residues: MKNTIIKGLTDLVEQKRDNLIRQVVVQLEAQGYKAVLEQATVQQFCRQFALSPVEFALRCLPVAACYALTPISQFNVGAIAIGQSGSFYFGANQEFVAASMQQTVHAEQSAISHAWLAGEKAIAHMVVNYTPCGHCRQFMNELNSAERLKIHLPHSQNNLLHNYLPDAFGPKDLNIQNVFFDGQSHPFNYQGHDPLIRAAVEAASQSYAPYSQAFSGVALQLGELIICGRYAENAAFNPTFLPLQSALNYQRLQGLIDVKVSRVVMAEAKADLTSLPMTQSLAGAHLGLDIEYISL.

CMP/dCMP-type deaminase domains lie at 52-167 and 191-296; these read SPVE…YLPD and QGHD…YISL. 93–95 is a substrate binding site; sequence NQE. H106 serves as a coordination point for Zn(2+). E108 (proton donor) is an active-site residue. Residues C133 and C136 each contribute to the Zn(2+) site.

Belongs to the cytidine and deoxycytidylate deaminase family. Homodimer. The cofactor is Zn(2+).

The enzyme catalyses cytidine + H2O + H(+) = uridine + NH4(+). The catalysed reaction is 2'-deoxycytidine + H2O + H(+) = 2'-deoxyuridine + NH4(+). In terms of biological role, this enzyme scavenges exogenous and endogenous cytidine and 2'-deoxycytidine for UMP synthesis. This Mannheimia succiniciproducens (strain KCTC 0769BP / MBEL55E) protein is Cytidine deaminase.